Reading from the N-terminus, the 104-residue chain is Conantokin-P (104 aa).

The N-terminal stretch at 1–26 (MQLYTYLYLLVPLVTFHLILSTGTLA) is a signal peptide. Positions 27–80 (HGGTLTERRSTDTTALKPEPVLLQKSDARSTDDNDKDRLTQMKRILKKRGNKAR) are excised as a propeptide. A disordered region spans residues 29–87 (GTLTERRSTDTTALKPEPVLLQKSDARSTDDNDKDRLTQMKRILKKRGNKARGEEEHSK). Residues 52-66 (SDARSTDDNDKDRLT) are compositionally biased toward basic and acidic residues. A 4-carboxyglutamate mark is found at E83, E84, E90, E94, and E103. 2 residues coordinate a divalent metal cation: E90 and E94. C91 and C104 form a disulfide bridge.

Belongs to the conotoxin B superfamily. As to expression, expressed by the venom duct.

The protein localises to the secreted. Conantokins inhibit N-methyl-D-aspartate (NMDA) receptors. This toxin has the highest potency for the NR2B/GRIN2B subunit, followed by NR2A/GRIN2A, NR2C/GRIN2C, and NR2D/GRIN2D subunits. This Conus purpurascens (Purple cone) protein is Conantokin-P.